Reading from the N-terminus, the 49-residue chain is Large ribosomal subunit protein bL33A (49 aa).

It belongs to the bacterial ribosomal protein bL33 family.

In Staphylococcus aureus (strain COL), this protein is Large ribosomal subunit protein bL33A.